Reading from the N-terminus, the 278-residue chain is Tryptophan 2,3-dioxygenase (278 aa).

Substrate is bound by residues 47-51 (FIVQH), Y109, and R113. H236 contributes to the heme binding site. Residue T250 coordinates substrate.

The protein belongs to the tryptophan 2,3-dioxygenase family. In terms of assembly, homotetramer. Requires heme as cofactor.

The enzyme catalyses L-tryptophan + O2 = N-formyl-L-kynurenine. Its pathway is amino-acid degradation; L-tryptophan degradation via kynurenine pathway; L-kynurenine from L-tryptophan: step 1/2. Functionally, heme-dependent dioxygenase that catalyzes the oxidative cleavage of the L-tryptophan (L-Trp) pyrrole ring and converts L-tryptophan to N-formyl-L-kynurenine. Catalyzes the oxidative cleavage of the indole moiety. The chain is Tryptophan 2,3-dioxygenase from Ralstonia pickettii (strain 12J).